The following is a 332-amino-acid chain: Lipoyl synthase (332 aa).

[4Fe-4S] cluster-binding residues include cysteine 74, cysteine 79, cysteine 85, cysteine 100, cysteine 104, cysteine 107, and serine 314. The region spanning 85–303 (CFGKGTATFM…EQEAYRMGFS (219 aa)) is the Radical SAM core domain.

The protein belongs to the radical SAM superfamily. Lipoyl synthase family. [4Fe-4S] cluster is required as a cofactor.

It localises to the cytoplasm. The enzyme catalyses [[Fe-S] cluster scaffold protein carrying a second [4Fe-4S](2+) cluster] + N(6)-octanoyl-L-lysyl-[protein] + 2 oxidized [2Fe-2S]-[ferredoxin] + 2 S-adenosyl-L-methionine + 4 H(+) = [[Fe-S] cluster scaffold protein] + N(6)-[(R)-dihydrolipoyl]-L-lysyl-[protein] + 4 Fe(3+) + 2 hydrogen sulfide + 2 5'-deoxyadenosine + 2 L-methionine + 2 reduced [2Fe-2S]-[ferredoxin]. It functions in the pathway protein modification; protein lipoylation via endogenous pathway; protein N(6)-(lipoyl)lysine from octanoyl-[acyl-carrier-protein]: step 2/2. Catalyzes the radical-mediated insertion of two sulfur atoms into the C-6 and C-8 positions of the octanoyl moiety bound to the lipoyl domains of lipoate-dependent enzymes, thereby converting the octanoylated domains into lipoylated derivatives. The polypeptide is Lipoyl synthase (Verminephrobacter eiseniae (strain EF01-2)).